The following is a 736-amino-acid chain: Catalase-peroxidase (736 aa).

Positions 100–223 (WHSAGTYRIG…LAAVQMGLIY (124 aa)) form a cross-link, tryptophyl-tyrosyl-methioninium (Trp-Tyr) (with M-249). H101 functions as the Proton acceptor in the catalytic mechanism. The tryptophyl-tyrosyl-methioninium (Tyr-Met) (with W-100) cross-link spans 223–249 (YVNPEGPDGKPDPVAAARDIRETFRRM). Residue H264 participates in heme b binding.

Belongs to the peroxidase family. Peroxidase/catalase subfamily. As to quaternary structure, homodimer or homotetramer. It depends on heme b as a cofactor. In terms of processing, formation of the three residue Trp-Tyr-Met cross-link is important for the catalase, but not the peroxidase activity of the enzyme.

It catalyses the reaction H2O2 + AH2 = A + 2 H2O. The enzyme catalyses 2 H2O2 = O2 + 2 H2O. Bifunctional enzyme with both catalase and broad-spectrum peroxidase activity. This chain is Catalase-peroxidase, found in Geobacillus kaustophilus (strain HTA426).